The following is a 639-amino-acid chain: Polyvinylalcohol dehydrogenase (639 aa).

A signal peptide spans 1-33; sequence MQQNIERNQVSMTTSRFVWGAVMALVALGSASA. A Cytochrome c domain is found at 36-152; the sequence is LNLPDGAALY…TPDQWNGWGA (117 aa). The heme site is built by C49, C52, and H53.

The protein belongs to the bacterial PQQ dehydrogenase family. In terms of assembly, monomer. Requires pyrroloquinoline quinone as cofactor.

The protein resides in the cytoplasm. It carries out the reaction a polyvinyl alcohol + 2n Fe(III)-[cytochrome c] = an oxidized polyvinyl alcohol + 2n Fe(II)-[cytochrome c] + 2n H(+). Functionally, catalyzes the oxidation of polyvinyl alcohol (PVA) in the polyvinyl alcohol degradation pathway. This Pseudomonas sp protein is Polyvinylalcohol dehydrogenase (pvaA).